Reading from the N-terminus, the 464-residue chain is Argininosuccinate lyase (464 aa).

This sequence belongs to the lyase 1 family. Argininosuccinate lyase subfamily.

Its subcellular location is the cytoplasm. It catalyses the reaction 2-(N(omega)-L-arginino)succinate = fumarate + L-arginine. It participates in amino-acid biosynthesis; L-arginine biosynthesis; L-arginine from L-ornithine and carbamoyl phosphate: step 3/3. The sequence is that of Argininosuccinate lyase from Pseudomonas fluorescens (strain SBW25).